A 625-amino-acid polypeptide reads, in one-letter code: MARVRGPRLPGCLALAALFSLVHSQHVFLAHQQASSLLQRARRANKGFLEEVRKGNLERECLEEPCSREEAFEALESLSATDAFWAKYTACESARNPREKLNECLEGNCAEGVGMNYRGNVSVTRSGIECQLWRSRYPHKPEINSTTHPGADLRENFCRNPDGSITGPWCYTTSPTLRREECSVPVCGQDRVTVEVIPRSGGSTTSQSPLLETCVPDRGREYRGRLAVTTSGSRCLAWSSEQAKALSKDQDFNPAVPLAENFCRNPDGDEEGAWCYVADQPGDFEYCDLNYCEEPVDGDLGDRLGEDPDPDAAIEGRTSEDHFQPFFNEKTFGAGEADCGLRPLFEKKQVQDQTEKELFESYIEGRIVEGQDAEVGLSPWQVMLFRKSPQELLCGASLISDRWVLTAAHCLLYPPWDKNFTVDDLLVRIGKHSRTRYERKVEKISMLDKIYIHPRYNWKENLDRDIALLKLKRPIELSDYIHPVCLPDKQTAAKLLHAGFKGRVTGWGNRRETWTTSVAEVQPSVLQVVNLPLVERPVCKASTRIRITDNMFCAGYKPGEGKRGDACEGDSGGPFVMKSPYNNRWYQMGIVSWGEGCDRDGKYGFYTHVFRLKKWIQKVIDRLGS.

The first 24 residues, 1–24 (MARVRGPRLPGCLALAALFSLVHS), serve as a signal peptide directing secretion. Positions 25 to 43 (QHVFLAHQQASSLLQRARR) are excised as a propeptide. The Gla domain maps to 44 to 90 (ANKGFLEEVRKGNLERECLEEPCSREEAFEALESLSATDAFWAKYTA). 4-carboxyglutamate is present on residues E50, E51, E58, E60, E63, E64, E69, E70, E73, and E76. Cysteines 61 and 66 form a disulfide. 11 disulfide bridges follow: C91/C104, C109/C187, C130/C170, C158/C182, C214/C292, C235/C275, C263/C287, C339/C485, C394/C410, C539/C553, and C567/C597. Kringle domains follow at residues 109–187 (CAEG…VPVC) and 214–292 (CVPD…LNYC). Residues N120 and N144 are each glycosylated (N-linked (GlcNAc...) asparagine). In terms of domain architecture, Peptidase S1 spans 367-621 (IVEGQDAEVG…LKKWIQKVID (255 aa)). H409 acts as the Charge relay system in catalysis. N-linked (GlcNAc...) asparagine glycosylation occurs at N419. Catalysis depends on D465, which acts as the Charge relay system. Positions 554-576 (AGYKPGEGKRGDACEGDSGGPFV) are high affinity receptor-binding region which is also known as the TP508 peptide. The active-site Charge relay system is S571.

It belongs to the peptidase S1 family. Heterodimer (named alpha-thrombin) of a light and a heavy chain; disulfide-linked. Forms a heterodimer with SERPINA5. In plasma, interacts (via N-terminus) with alpha-1-microglobulin; this interaction does not prevent the activation of prothrombin to thrombin. Post-translationally, the gamma-carboxyglutamyl residues, which bind calcium ions, result from the carboxylation of glutamyl residues by a microsomal enzyme, the vitamin K-dependent carboxylase. The modified residues are necessary for the calcium-dependent interaction with a negatively charged phospholipid surface, which is essential for the conversion of prothrombin to thrombin. In terms of processing, in the penultimate step of the coagulation cascade, prothrombin is converted to thrombin by the prothrombinase complex composed of factor Xa (F10), cofactor Va (F5), and phospholipids. This activation requires factor Xa-catalyzed sequential cleavage at 2 sites, Arg-317 and Arg-366, along 2 possible pathways. In the first pathway, the first cleavage occurs at Arg-317, leading to the formation of the inactive intermediate prethrombin-2. This pathway preferentially occurs on platelets and in the absence of cofactor Va. In the second pathway, the first cleavage occurs at Arg-366, which separates protease domain into 2 chains that remain connected through a disulfide bond and generates the active intermediate meizothrombin. The presence of cofactor Va directs activation along the meizothrombin pathway and greatly accelerates the rate of cleavage at Arg-366, but has a smaller effect on the cleavage of meizothrombin at Arg-317. Meizothrombin accumulates as an intermediate when prothrombinase is assembled on the membrane of red blood cells. In terms of tissue distribution, expressed by the liver and secreted in plasma.

It is found in the secreted. The protein localises to the extracellular space. The enzyme catalyses Selective cleavage of Arg-|-Gly bonds in fibrinogen to form fibrin and release fibrinopeptides A and B.. With respect to regulation, activity is promoted in the presence of negatively charged surfaces, such as polyphosphate and dextran sulfate. Inhibited by SERPINA5. Its function is as follows. Thrombin, which cleaves bonds after Arg and Lys, converts fibrinogen to fibrin and activates factors V, VII, VIII, XIII, and, in complex with thrombomodulin, protein C. Functions in blood homeostasis, inflammation and wound healing. Activates coagulation factor XI (F11); activation is promoted by the contact with negatively charged surfaces. Triggers the production of pro-inflammatory cytokines, such as MCP-1/CCL2 and IL8/CXCL8, in endothelial cells. The chain is Prothrombin (F2) from Bos taurus (Bovine).